We begin with the raw amino-acid sequence, 469 residues long: Adenosylhomocysteinase (469 aa).

T63, D139, and E164 together coordinate substrate. An NAD(+)-binding site is contributed by 165–167 (TTT). Residues K194 and D198 each contribute to the substrate site. NAD(+) is bound by residues N199, 228-233 (GYGDVG), E251, N300, 321-323 (IGH), and N375.

It belongs to the adenosylhomocysteinase family. The cofactor is NAD(+).

The protein resides in the cytoplasm. The enzyme catalyses S-adenosyl-L-homocysteine + H2O = L-homocysteine + adenosine. Its pathway is amino-acid biosynthesis; L-homocysteine biosynthesis; L-homocysteine from S-adenosyl-L-homocysteine: step 1/1. May play a key role in the regulation of the intracellular concentration of adenosylhomocysteine. The sequence is that of Adenosylhomocysteinase from Pseudomonas entomophila (strain L48).